Here is a 205-residue protein sequence, read N- to C-terminus: Small ribosomal subunit protein uS4 (205 aa).

The span at 1–16 (MSKRESSKYKIDRRMG) shows a compositional bias: basic and acidic residues. Positions 1 to 46 (MSKRESSKYKIDRRMGENIWGRPKSPVNRREYGPGQHGQRRKGKLS) are disordered. The 64-residue stretch at 94–157 (SRLDAIVYRA…KQLVTVLEAV (64 aa)) folds into the S4 RNA-binding domain.

Belongs to the universal ribosomal protein uS4 family. As to quaternary structure, part of the 30S ribosomal subunit. Contacts protein S5. The interaction surface between S4 and S5 is involved in control of translational fidelity.

Functionally, one of the primary rRNA binding proteins, it binds directly to 16S rRNA where it nucleates assembly of the body of the 30S subunit. With S5 and S12 plays an important role in translational accuracy. The chain is Small ribosomal subunit protein uS4 from Rhizobium etli (strain CIAT 652).